Consider the following 605-residue polypeptide: DNA mismatch repair protein MutL (605 aa).

This sequence belongs to the DNA mismatch repair MutL/HexB family.

In terms of biological role, this protein is involved in the repair of mismatches in DNA. It is required for dam-dependent methyl-directed DNA mismatch repair. May act as a 'molecular matchmaker', a protein that promotes the formation of a stable complex between two or more DNA-binding proteins in an ATP-dependent manner without itself being part of a final effector complex. This is DNA mismatch repair protein MutL from Pelotomaculum thermopropionicum (strain DSM 13744 / JCM 10971 / SI).